Here is a 110-residue protein sequence, read N- to C-terminus: Nucleoid-associated protein KPN78578_04440 (110 aa).

This sequence belongs to the YbaB/EbfC family. Homodimer.

The protein localises to the cytoplasm. The protein resides in the nucleoid. Functionally, binds to DNA and alters its conformation. May be involved in regulation of gene expression, nucleoid organization and DNA protection. In Klebsiella pneumoniae subsp. pneumoniae (strain ATCC 700721 / MGH 78578), this protein is Nucleoid-associated protein KPN78578_04440.